Reading from the N-terminus, the 353-residue chain is JmjC domain-containing protein E (353 aa).

Residues tyrosine 138–lysine 348 enclose the JmjC domain.

The polypeptide is JmjC domain-containing protein E (jcdE) (Dictyostelium discoideum (Social amoeba)).